A 1862-amino-acid chain; its full sequence is Protein RRP5 homolog (1862 aa).

A disordered region spans residues 1-56; the sequence is MANLEESFPRGGTRKLHKSEKSSQQVVEQDNLFDVSTEEGPIKRKKSQKGPAKTKK. The residue at position 2 (alanine 2) is an N-acetylalanine. Residue serine 7 is modified to Phosphoserine. Positions 43 to 56 are enriched in basic residues; the sequence is KRKKSQKGPAKTKK. S1 motif domains follow at residues 83–171, 187–258, 281–346, and 365–436; these read GMRI…LSVN, GMLL…LSVE, GLLV…LSLR, and GAVL…LSLR. Serine 438 is modified (phosphoserine). S1 motif domains are found at residues 453 to 522, 542 to 611, 636 to 707, 729 to 798, and 846 to 911; these read GTVV…MTLK, GLQT…LSFR, GQLV…LCRK, GMLL…LSLR, and GMVL…VSLH. The segment at 999–1036 is disordered; it reads SKRTRMPVQRDSETVDDKGEEKEEEEEEEEKEEENLTV. Over residues 1006–1019 the composition is skewed to basic and acidic residues; the sequence is VQRDSETVDDKGEE. A compositionally biased stretch (acidic residues) spans 1020 to 1033; the sequence is KEEEEEEEEKEEEN. S1 motif domains are found at residues 1047–1120, 1160–1233, 1241–1309, and 1335–1407; these read GDKV…ISHP, GQTV…LSLI, GEVA…LSLR, and GQLL…LSLL. Disordered regions lie at residues 1406 to 1520 and 1545 to 1577; these read LLPS…STEV and REES…KAEK. 2 stretches are compositionally biased toward basic and acidic residues: residues 1423 to 1437 and 1445 to 1454; these read PKQE…EGQK and RREEKEEPQK. Lysine 1424 is covalently cross-linked (Glycyl lysine isopeptide (Lys-Gly) (interchain with G-Cter in SUMO2)). Phosphoserine occurs at positions 1468 and 1490. Residues 1566–1577 are compositionally biased toward basic and acidic residues; it reads KERELEKQKAEK. HAT repeat units follow at residues 1590-1622, 1696-1728, 1766-1798, and 1800-1835; these read GRQP…FHLQ, EKYK…FVLG, GDVE…MTIK, and GSQT…YEKQ.

In terms of assembly, interacts with NF-kappa-B p50/NFKB1 and NF-kappa-B p65/RELA. Ubiquitous.

The protein localises to the nucleus. It is found in the nucleolus. Essential for the generation of mature 18S rRNA, specifically necessary for cleavages at sites A0, 1 and 2 of the 47S precursor. Directly interacts with U3 snoRNA. In Mus musculus (Mouse), this protein is Protein RRP5 homolog (Pdcd11).